The primary structure comprises 209 residues: Uracil phosphoribosyltransferase (209 aa).

5-phospho-alpha-D-ribose 1-diphosphate-binding positions include Arg-79, Arg-104, and 131–139; that span reads DPMLATGGT. Residues Ile-194 and 199-201 contribute to the uracil site; that span reads GDA. 5-phospho-alpha-D-ribose 1-diphosphate is bound at residue Asp-200.

Belongs to the UPRTase family. Mg(2+) serves as cofactor.

It carries out the reaction UMP + diphosphate = 5-phospho-alpha-D-ribose 1-diphosphate + uracil. It participates in pyrimidine metabolism; UMP biosynthesis via salvage pathway; UMP from uracil: step 1/1. With respect to regulation, allosterically activated by GTP. In terms of biological role, catalyzes the conversion of uracil and 5-phospho-alpha-D-ribose 1-diphosphate (PRPP) to UMP and diphosphate. This Pseudoalteromonas atlantica (strain T6c / ATCC BAA-1087) protein is Uracil phosphoribosyltransferase.